Consider the following 422-residue polypeptide: MSFVECPYHSPAERLVAEADEGGPSAITGMGLCFRCLLFSFSGRSGVEGGRVDLNVFGSLGLQPWIGSSRCWGGPCSSALRCGWFSSWPPPSKSAIPIGGGSRGAGRVSRWPPPHWLEAWRVSPLPLSPLSPATFGRGFIAVAVIPGLWARGRGCSSDRLPRPAGPARRQFQAASLLTRGWGRAWPWKQILKELDECYERFSRETDGAQKRRMLHCVQRALIRSQELGDEKIQIVSQMVELVENRTRQVDSHVELFEAQQELGDTAGNSGKAGADRPKGEAAAQADKPNSKRSRRQRNNENRENASSNHDHDDGASGTPKEKKAKTSKKKKRSKAKAEREASPADLPIDPNEPTYCLCNQVSYGEMIGCDNDECPIEWFHFSCVGLNHKPKGKWYCPKCRGENEKTMDKALEKSKKERAYNR.

Positions 261 to 349 (ELGDTAGNSG…EASPADLPID (89 aa)) are disordered. A Glycyl lysine isopeptide (Lys-Gly) (interchain with G-Cter in SUMO2) cross-link involves residue Lys-278. Positions 297-314 (RNNENRENASSNHDHDDG) are enriched in basic and acidic residues. Residues 322-334 (KKAKTSKKKKRSK) show a composition bias toward basic residues. A PHD-type zinc finger spans residues 353-402 (PTYCLCNQVSYGEMIGCDNDECPIEWFHFSCVGLNHKPKGKWYCPKCRGE). Zn(2+) contacts are provided by Cys-356, Cys-358, Cys-369, Cys-374, His-380, Cys-383, Cys-396, and Cys-399. Positions 405-422 (KTMDKALEKSKKERAYNR) are PBR.

Belongs to the ING family. In terms of assembly, interacts with H3K4me3 and to a lesser extent with H3K4me2. Interacts with TP53. Isoform 2 interacts with RSL1D1. In terms of tissue distribution, isoform 2 was expressed in all normal tissues and cells examined, as well as in all breast cancer and melanoma cell lines examined. Isoform 3 was expressed in testis, liver, and kidney, weakly expressed in colon and brain and not expressed in breast and cultured melanocytes. Isoform 4 was highly expressed in testis and weakly expressed in brain, but not expressed in breast, colon, kidney, melanocytes, breast cancer or melanoma cell lines.

The protein localises to the nucleus. Cooperates with p53/TP53 in the negative regulatory pathway of cell growth by modulating p53-dependent transcriptional activation. Implicated as a tumor suppressor gene. In Homo sapiens (Human), this protein is Inhibitor of growth protein 1 (ING1).